The primary structure comprises 471 residues: GDP-fucose protein O-fucosyltransferase 3 (471 aa).

The Cytoplasmic segment spans residues 1-8 (MNRMWEKK). The chain crosses the membrane as a helical; Signal-anchor for type II membrane protein span at residues 9–29 (FWISCFFIILFFILVTLQVMV). The Lumenal segment spans residues 30–471 (ELGRFEKRET…EFWNLVFKFQ (442 aa)). Residues Asn102, Asn122, Asn160, and Asn310 are each glycosylated (N-linked (GlcNAc...) asparagine). A disulfide bond links Cys381 and Cys384. Residue Asn457 is glycosylated (N-linked (GlcNAc...) asparagine).

The protein belongs to the glycosyltransferase 10 family.

Its subcellular location is the endoplasmic reticulum membrane. It catalyses the reaction L-threonyl-[protein] + GDP-beta-L-fucose = 3-O-(alpha-L-fucosyl)-L-threonyl-[protein] + GDP + H(+). It carries out the reaction L-seryl-[protein] + GDP-beta-L-fucose = 3-O-(alpha-L-fucosyl)-L-seryl-[protein] + GDP + H(+). It functions in the pathway protein modification; protein glycosylation. Its function is as follows. Protein O-fucosyltransferase that specifically catalyzes O-fucosylation of serine or threonine residues in EMI domains of target proteins. Attaches fucose through an O-glycosidic linkage. O-fucosylation of EMI domain-containing proteins may be required for facilitating protein folding and secretion. This is GDP-fucose protein O-fucosyltransferase 3 (fut10) from Xenopus tropicalis (Western clawed frog).